Reading from the N-terminus, the 69-residue chain is uncharacterized protein (69 aa).

A helical transmembrane segment spans residues 13–35 (IRSINPTLLNFINYFLLIVPQFI).

Its subcellular location is the membrane. This is an uncharacterized protein from Saccharomyces cerevisiae (strain ATCC 204508 / S288c) (Baker's yeast).